The chain runs to 359 residues: MKPSIYSLTRDELIAWAVERGQKQFRATQIWDWLYKKRVQSFEEMTNISKDFVSILNDSFCVNPLKQRVVQESADGTVKYLFELPDGMLIETVLMRQHYGHSVCVTTQVGCNIGCTFCASGLIKKQRDLNSGEITAQIMLVQKYFDDRKQGERVSHVVVMGIGEPFDNYKNVMCFLRVINDDNGLAIGARHITVSTSGLAHKIRDFANEGVQVNLAVSLHAPNNDLRSRIMRVNRSFPLEKLFSAIEYYIEKTNRRVTFEYIMLNEVNDSIKQAQELADLTKTIRKLSYVNLIPYNPVSEHDQYSRSLKERVLAFYDVLKKNGVNCVVRQEHGTDIDAACGQLRSKTMKKDREKVTATK.

E91 functions as the Proton acceptor in the catalytic mechanism. The Radical SAM core domain occupies 97-335 (QHYGHSVCVT…CVVRQEHGTD (239 aa)). Residues C104 and C340 are joined by a disulfide bond. [4Fe-4S] cluster is bound by residues C111, C115, and C118. S-adenosyl-L-methionine-binding positions include 163–164 (GE), S195, 218–220 (SLH), and N296. C340 (S-methylcysteine intermediate) is an active-site residue.

Belongs to the radical SAM superfamily. RlmN family. [4Fe-4S] cluster serves as cofactor.

The protein resides in the cytoplasm. It carries out the reaction adenosine(2503) in 23S rRNA + 2 reduced [2Fe-2S]-[ferredoxin] + 2 S-adenosyl-L-methionine = 2-methyladenosine(2503) in 23S rRNA + 5'-deoxyadenosine + L-methionine + 2 oxidized [2Fe-2S]-[ferredoxin] + S-adenosyl-L-homocysteine. The enzyme catalyses adenosine(37) in tRNA + 2 reduced [2Fe-2S]-[ferredoxin] + 2 S-adenosyl-L-methionine = 2-methyladenosine(37) in tRNA + 5'-deoxyadenosine + L-methionine + 2 oxidized [2Fe-2S]-[ferredoxin] + S-adenosyl-L-homocysteine. Specifically methylates position 2 of adenine 2503 in 23S rRNA and position 2 of adenine 37 in tRNAs. The polypeptide is Probable dual-specificity RNA methyltransferase RlmN (Streptococcus pyogenes serotype M12 (strain MGAS2096)).